We begin with the raw amino-acid sequence, 246 residues long: Probable transcriptional regulatory protein HSM_1763 (246 aa).

Belongs to the TACO1 family.

The protein localises to the cytoplasm. This Histophilus somni (strain 2336) (Haemophilus somnus) protein is Probable transcriptional regulatory protein HSM_1763.